We begin with the raw amino-acid sequence, 98 residues long: Large ribosomal subunit protein uL23 (98 aa).

It belongs to the universal ribosomal protein uL23 family. As to quaternary structure, part of the 50S ribosomal subunit. Contacts protein L29, and trigger factor when it is bound to the ribosome.

Its function is as follows. One of the early assembly proteins it binds 23S rRNA. One of the proteins that surrounds the polypeptide exit tunnel on the outside of the ribosome. Forms the main docking site for trigger factor binding to the ribosome. In Alcanivorax borkumensis (strain ATCC 700651 / DSM 11573 / NCIMB 13689 / SK2), this protein is Large ribosomal subunit protein uL23.